The primary structure comprises 1252 residues: Elongator complex protein 1 (1252 aa).

Residues 814–1252 (VDVNDLYNVA…MMDWQHEILQ (439 aa)) are mediates dimerization. Ser1094 carries the phosphoserine modification. The disordered stretch occupies residues 1097 to 1116 (SSQYSGTSRRTGKTFRSSKN). The segment covering 1106–1116 (RTGKTFRSSKN) has biased composition (basic residues). Residues 1111 to 1129 (FRSSKNRRKHERKLFSLKP) form a required for binding to tRNA region.

Belongs to the ELP1/IKA1 family. As to quaternary structure, homodimer. Component of the elongator complex composed of Elp1, Elp2, Elp3, Elp4, Elp5 and Elp6. The elongator complex associates with and stabilizes microtubules; efficient interaction requires the full complex.

Its subcellular location is the cytoplasm. It localises to the nucleus. The protein resides in the cytoskeleton. The protein localises to the spindle. It participates in tRNA modification; 5-methoxycarbonylmethyl-2-thiouridine-tRNA biosynthesis. Its function is as follows. Component of the elongator complex, which is required for multiple tRNA modifications, including mcm5U (5-methoxycarbonylmethyl uridine), mcm5s2U (5-methoxycarbonylmethyl-2-thiouridine), and ncm5U (5-carbamoylmethyl uridine). The elongator complex catalyzes formation of carboxymethyluridine in the wobble base at position 34 in tRNAs. ELP1 binds to tRNA, mediating interaction of the elongator complex with tRNA. Binding by the elongator complex stabilizes microtubules and promotes their growth. This induces central spindle asymmetry, promoting polarized signaling endosome trafficking during asymmetric cell division and cell fate assignation of sensory organ precursor cells. Involved in protein synthesis-dependent long-term memory formation, probably as part of the elongator complex. In Drosophila melanogaster (Fruit fly), this protein is Elongator complex protein 1.